Here is a 65-residue protein sequence, read N- to C-terminus: Gallinacin-12 (65 aa).

An N-terminal signal peptide occupies residues Met1–Thr19. 3 disulfides stabilise this stretch: Cys25–Cys54, Cys32–Cys47, and Cys37–Cys55.

It belongs to the beta-defensin family. In terms of tissue distribution, expressed in the large intestine, kidney liver, gall bladder, testis, ovary and male and female reproductive tracts. Expressed in the ovarian stroma and the theca and granulosa layers of the ovarian follicle.

It localises to the secreted. It is found in the cytoplasmic granule. Has bactericidal activity. The chain is Gallinacin-12 (GAL12) from Gallus gallus (Chicken).